Here is a 473-residue protein sequence, read N- to C-terminus: MTLFPIFADLTGRRVLVVGGGAVAVRKTQALLQAGAEVVVGAPRLDPALAALAEQGGIARLDGGFEPAWLAGAWLVVAATDDRAVNAAVSEAARARRVFCNVVDDAELSSFQVPSVVDRSPLIVAISSSGVAPVLARRLRERIESLFDHSLGQLAALAARYRPRIRAARPDLGQRRRFYDWLLDGPVAARLRQQQPGLAEQELEQALRAPQAAPRGSVVLVGAGPGDPGLLTLKALRALNEADIILYDRLVSEGVLALARRDAERVPVGKLPGKGHDATQARIHALMLAQARAGRRVVRLKGGDAFIFGRGGEELEYLRAHGVPYEVVPGITAALACAAYAGMPLTHRDHAQSVRMVTAHCRADQDTLDWAGLARDQQTLAFYMGVGQLDYVTARLLEHGRAPATPFALIENGSRPEQRVVTGTLADLPEIARRRGVRPPALLVIGEVAALADTLQWFGQHQRGLPGPQALAA.

Positions 1–203 are precorrin-2 dehydrogenase /sirohydrochlorin ferrochelatase; it reads MTLFPIFADL…QQPGLAEQEL (203 aa). NAD(+)-binding positions include 22-23 and 43-44; these read AV and PR. Serine 128 carries the post-translational modification Phosphoserine. The tract at residues 216 to 473 is uroporphyrinogen-III C-methyltransferase; sequence GSVVLVGAGP…GLPGPQALAA (258 aa). Proline 225 is an S-adenosyl-L-methionine binding site. Residue aspartate 248 is the Proton acceptor of the active site. Lysine 270 (proton donor) is an active-site residue. S-adenosyl-L-methionine is bound by residues 302 to 304, isoleucine 307, 332 to 333, methionine 384, and glycine 413; these read GGD and TA.

The protein in the N-terminal section; belongs to the precorrin-2 dehydrogenase / sirohydrochlorin ferrochelatase family. This sequence in the C-terminal section; belongs to the precorrin methyltransferase family.

It catalyses the reaction uroporphyrinogen III + 2 S-adenosyl-L-methionine = precorrin-2 + 2 S-adenosyl-L-homocysteine + H(+). It carries out the reaction precorrin-2 + NAD(+) = sirohydrochlorin + NADH + 2 H(+). The catalysed reaction is siroheme + 2 H(+) = sirohydrochlorin + Fe(2+). The protein operates within cofactor biosynthesis; adenosylcobalamin biosynthesis; precorrin-2 from uroporphyrinogen III: step 1/1. It functions in the pathway cofactor biosynthesis; adenosylcobalamin biosynthesis; sirohydrochlorin from precorrin-2: step 1/1. It participates in porphyrin-containing compound metabolism; siroheme biosynthesis; precorrin-2 from uroporphyrinogen III: step 1/1. Its pathway is porphyrin-containing compound metabolism; siroheme biosynthesis; siroheme from sirohydrochlorin: step 1/1. The protein operates within porphyrin-containing compound metabolism; siroheme biosynthesis; sirohydrochlorin from precorrin-2: step 1/1. Functionally, multifunctional enzyme that catalyzes the SAM-dependent methylations of uroporphyrinogen III at position C-2 and C-7 to form precorrin-2 via precorrin-1. Then it catalyzes the NAD-dependent ring dehydrogenation of precorrin-2 to yield sirohydrochlorin. Finally, it catalyzes the ferrochelation of sirohydrochlorin to yield siroheme. The chain is Siroheme synthase from Bordetella pertussis (strain Tohama I / ATCC BAA-589 / NCTC 13251).